A 311-amino-acid chain; its full sequence is Formimidoylglutamase (311 aa).

Mn(2+)-binding residues include His130, Asp155, His157, Asp159, Cys242, and Asp244.

This sequence belongs to the arginase family. It depends on Mn(2+) as a cofactor.

It catalyses the reaction N-formimidoyl-L-glutamate + H2O = formamide + L-glutamate. Its pathway is amino-acid degradation; L-histidine degradation into L-glutamate; L-glutamate from N-formimidoyl-L-glutamate (hydrolase route): step 1/1. In terms of biological role, catalyzes the conversion of N-formimidoyl-L-glutamate to L-glutamate and formamide. This Staphylococcus aureus (strain Mu3 / ATCC 700698) protein is Formimidoylglutamase.